The sequence spans 143 residues: MLQPKRTKFRKAHKGRIHGNAPGGATLNFGAYGLKAMEPDRITARQIEAARRAITRHIRRQGRLWIRIFPDVPVSSKPAEVRMGSGKGSPEFWVARVKPGRILFELDGVPGPIARVAFERAAAKLPIKVKVVARLGETIYEEA.

Basic residues predominate over residues 1 to 17; the sequence is MLQPKRTKFRKAHKGRI. Positions 1–20 are disordered; it reads MLQPKRTKFRKAHKGRIHGN.

Belongs to the universal ribosomal protein uL16 family. In terms of assembly, part of the 50S ribosomal subunit.

Functionally, binds 23S rRNA and is also seen to make contacts with the A and possibly P site tRNAs. This is Large ribosomal subunit protein uL16 from Zymomonas mobilis subsp. mobilis (strain ATCC 31821 / ZM4 / CP4).